Here is a 309-residue protein sequence, read N- to C-terminus: Biotin synthase (309 aa).

The Radical SAM core domain maps to 35–259; it reads NKIQISSLLS…MIPKSYIRLS (225 aa). Residues C50, C54, and C57 each coordinate [4Fe-4S] cluster. 4 residues coordinate [2Fe-2S] cluster: C94, C125, C185, and R257.

Belongs to the radical SAM superfamily. Biotin synthase family. In terms of assembly, homodimer. [4Fe-4S] cluster is required as a cofactor. It depends on [2Fe-2S] cluster as a cofactor.

It carries out the reaction (4R,5S)-dethiobiotin + (sulfur carrier)-SH + 2 reduced [2Fe-2S]-[ferredoxin] + 2 S-adenosyl-L-methionine = (sulfur carrier)-H + biotin + 2 5'-deoxyadenosine + 2 L-methionine + 2 oxidized [2Fe-2S]-[ferredoxin]. It participates in cofactor biosynthesis; biotin biosynthesis; biotin from 7,8-diaminononanoate: step 2/2. Its function is as follows. Catalyzes the conversion of dethiobiotin (DTB) to biotin by the insertion of a sulfur atom into dethiobiotin via a radical-based mechanism. The polypeptide is Biotin synthase (Rickettsia felis (strain ATCC VR-1525 / URRWXCal2) (Rickettsia azadi)).